The sequence spans 848 residues: DIS3-like exonuclease 2 (848 aa).

The tract at residues Lys153–Cys173 is disordered. Mg(2+) is bound by residues Asp345 and Asp354.

It belongs to the RNR ribonuclease family. DIS3L2 subfamily. Mg(2+) serves as cofactor. Requires Mn(2+) as cofactor. Post-translationally, cleaved by caspase ced-3 in vitro.

Its subcellular location is the cytoplasm. It is found in the P-body. 3'-5'-exoribonuclease that specifically recognizes RNAs polyuridylated at their 3' end and mediates their degradation. Component of an exosome-independent RNA degradation pathway that mediates degradation of cytoplasmic mRNAs that have been deadenylated and subsequently uridylated at their 3'. This chain is DIS3-like exonuclease 2, found in Caenorhabditis elegans.